The primary structure comprises 564 residues: Threonine--tRNA ligase (564 aa).

The catalytic stretch occupies residues 167-464 (DHRSLGKQLE…LLEKTSGNFP (298 aa)). Cysteine 260, histidine 311, and histidine 441 together coordinate Zn(2+).

Belongs to the class-II aminoacyl-tRNA synthetase family. Homodimer. Requires Zn(2+) as cofactor.

Its subcellular location is the cytoplasm. It catalyses the reaction tRNA(Thr) + L-threonine + ATP = L-threonyl-tRNA(Thr) + AMP + diphosphate + H(+). Its function is as follows. Catalyzes the attachment of threonine to tRNA(Thr) in a two-step reaction: L-threonine is first activated by ATP to form Thr-AMP and then transferred to the acceptor end of tRNA(Thr). Also edits incorrectly charged L-seryl-tRNA(Thr). The chain is Threonine--tRNA ligase from Mycoplasma genitalium (strain ATCC 33530 / DSM 19775 / NCTC 10195 / G37) (Mycoplasmoides genitalium).